The sequence spans 84 residues: Small ribosomal subunit protein bS16 (84 aa).

This sequence belongs to the bacterial ribosomal protein bS16 family.

This is Small ribosomal subunit protein bS16 from Delftia acidovorans (strain DSM 14801 / SPH-1).